The sequence spans 212 residues: MQWTLVVPVKALARAKSRLSDTADDGLRPGLALAFAQDTVAAALACPAVADVAVVTDDARAGRELAALGAGVVADEPGGGLNAALAHGAAVVRAARPESPVAALNADLPALRPAELARVLAAATQFPRAFLPDAAGIGTTLLTVAPGQELAPAFGADSRARHRASGAVELRLDAVDSVRQDVDTGGDLRSALALGVGPRTAAVAARLLIAGQ.

Phosphoenolpyruvate contacts are provided by threonine 139, glycine 155, and serine 158.

Belongs to the CofC family.

It carries out the reaction phosphoenolpyruvate + GTP + H(+) = enolpyruvoyl-2-diphospho-5'-guanosine + diphosphate. The protein operates within cofactor biosynthesis; coenzyme F420 biosynthesis. In terms of biological role, guanylyltransferase that catalyzes the activation of phosphoenolpyruvate (PEP) as enolpyruvoyl-2-diphospho-5'-guanosine, via the condensation of PEP with GTP. It is involved in the biosynthesis of coenzyme F420, a hydride carrier cofactor. This Streptomyces coelicolor (strain ATCC BAA-471 / A3(2) / M145) protein is Phosphoenolpyruvate guanylyltransferase.